A 137-amino-acid polypeptide reads, in one-letter code: FAD synthase (137 aa).

Residues 5-6, 10-13, and Asp88 each bind ATP; these read TF and HPGH.

The protein belongs to the archaeal FAD synthase family. In terms of assembly, homodimer. Requires a divalent metal cation as cofactor.

The catalysed reaction is FMN + ATP + H(+) = FAD + diphosphate. The protein operates within cofactor biosynthesis; FAD biosynthesis; FAD from FMN: step 1/1. Its function is as follows. Catalyzes the transfer of the AMP portion of ATP to flavin mononucleotide (FMN) to produce flavin adenine dinucleotide (FAD) coenzyme. This Archaeoglobus fulgidus (strain ATCC 49558 / DSM 4304 / JCM 9628 / NBRC 100126 / VC-16) protein is FAD synthase.